A 306-amino-acid polypeptide reads, in one-letter code: Oligopeptide transport system permease protein OppB (306 aa).

Residues 1 to 12 (MLKFILRRCLEA) lie on the Cytoplasmic side of the membrane. The helical transmembrane segment at 13-30 (IPTLFILITISFFMMRLA) threads the bilayer. At 31–101 (PGSPFTGERA…ASFPVSAKLG (71 aa)) the chain is on the periplasmic side. In terms of domain architecture, ABC transmembrane type-1 spans 94–293 (FPVSAKLGAA…ALTILFNAIV (200 aa)). Residues 102-121 (AAAFLLAVIIGVSAGVIAAL) traverse the membrane as a helical segment. Over 122 to 133 (KQNTRWDYTVMG) the chain is Cytoplasmic. Residues 134-156 (FAMTGVVIPSFVVAPLLVMVFAI) form a helical membrane-spanning segment. Over 157-165 (TLQWLPGGG) the chain is Periplasmic. Residues 166 to 188 (WNGGALKFMILPMVALSLAYIAS) form a helical membrane-spanning segment. The Cytoplasmic segment spans residues 189–227 (IARITRGSMIEVLHSNFIRTARAKGLPMRRIIFRHALKP). Residues 228-250 (ALLPVLSYMGPAFVGIITGSMVI) form a helical membrane-spanning segment. Residues 251–277 (ETIYGLPGIGQLFVNGALNRDYSLVLS) lie on the Periplasmic side of the membrane. Residues 278 to 300 (LTILVGALTILFNAIVDVLYAVI) form a helical membrane-spanning segment. Topologically, residues 301 to 306 (DPKIRY) are cytoplasmic.

Belongs to the binding-protein-dependent transport system permease family. OppBC subfamily. As to quaternary structure, the complex is composed of two ATP-binding proteins (OppD and OppF), two transmembrane proteins (OppB and OppC) and a solute-binding protein (OppA).

It localises to the cell inner membrane. Functionally, part of the ABC transporter complex OppABCDF involved in the uptake of oligopeptides, including the cell wall murein tripeptide L-alanyl-gamma-D-glutamyl-meso-diaminopimelate. Responsible for the translocation of the substrate across the membrane. Plays an important nutritional role and is involved in the recycling of cell wall peptides. The protein is Oligopeptide transport system permease protein OppB of Salmonella typhimurium (strain LT2 / SGSC1412 / ATCC 700720).